Reading from the N-terminus, the 23-residue chain is Dermaseptin III-like peptide (23 aa).

Expressed by the skin glands.

The protein resides in the secreted. Its function is as follows. Possesses a potent antimicrobial activity against bacteria, fungi and protozoa. Probably acts by disturbing membrane functions with its amphipathic structure. The protein is Dermaseptin III-like peptide of Phyllomedusa burmeisteri (Brazilian common walking leaf frog).